We begin with the raw amino-acid sequence, 717 residues long: Delta-like protein D (717 aa).

The signal sequence occupies residues 1–19 (MGRLMIAVLLCVMISQGFC). Residues 20–547 (SGVFELKLQE…EEDDGGFPWT (528 aa)) are Extracellular-facing. A DSL domain is found at 175–219 (FVCDEHYYGEGCSVFCRPRDDTFGHFTCGERGEIICNSGWKGQYC). 26 cysteine pairs are disulfide-bonded: cysteine 177-cysteine 186, cysteine 190-cysteine 202, cysteine 210-cysteine 219, cysteine 224-cysteine 235, cysteine 228-cysteine 241, cysteine 243-cysteine 252, cysteine 261-cysteine 266, cysteine 274-cysteine 283, cysteine 290-cysteine 302, cysteine 296-cysteine 312, cysteine 314-cysteine 323, cysteine 330-cysteine 341, cysteine 335-cysteine 350, cysteine 352-cysteine 361, cysteine 368-cysteine 379, cysteine 373-cysteine 389, cysteine 391-cysteine 400, cysteine 407-cysteine 418, cysteine 412-cysteine 427, cysteine 429-cysteine 438, cysteine 445-cysteine 456, cysteine 450-cysteine 465, cysteine 467-cysteine 476, cysteine 483-cysteine 494, cysteine 488-cysteine 503, and cysteine 505-cysteine 514. EGF-like domains are found at residues 220-253 (TEPI…KYCD), 257-284 (RYPG…LFCN), and 286-324 (DLNY…DSCE). Residues 326 to 362 (EVNECSGSPCRNGGSCTDLENTYSCTCPPGFYGRNCE) enclose the EGF-like 4; calcium-binding domain. EGF-like domains are found at residues 364-401 (SAMT…FNCE) and 403-439 (KIDH…THCE). The EGF-like 7; calcium-binding domain maps to 441–477 (NIDECATYPCQNGGTCQDGLSDYTCTCPPGYTGKNCT). N-linked (GlcNAc...) asparagine glycosylation is present at asparagine 475. Residues 479 to 515 (AVNKCLHNPCHNGATCHEMDNRYVCACIPGYGGRNCQ) form the EGF-like 8 domain. Residues 548 to 568 (AVCAGIILVLLVLIGGSVFVI) form a helical membrane-spanning segment. Residues 569 to 717 (YIRLKLQQRS…KDECIIATEV (149 aa)) lie on the Cytoplasmic side of the membrane. A disordered region spans residues 649-693 (EDLGKEDSERSEATKCEPLDSDSEEKHRNHLKSDSSERKRTESLC).

Interacts with mib. Ubiquitinated by mib, leading to its endocytosis and subsequent degradation. In terms of tissue distribution, expressed in both mesodermal and neuroectodermal regions. In the developing nervous system, it is expressed in overlapping regions with deltaB (dlb) and deltaA (dla); in the neural plate, dld is expressed in patches of contiguous cells with dla, while dlb is confined to scattered cells within those patches that will differentiate as neurons. In somites, it marks the anterior part of each formed somite, while deltaC (dlc) marks the posterior part. In 24 hours embryos, expressed in the hindbrain in stripes adjacent to rhombomere boundaries, but not in the actual boundary cells.

It localises to the membrane. Functionally, acts as a ligand for Notch receptors and is involved in primary neurogenesis and somitogenesis. Can activate Notch receptors, thereby playing a key role in lateral inhibition, a process that prevents the immediate neighbors of each nascent neural cell from simultaneously embarking on neural differentiation. Required in somite segmentation to keep the oscillations of neighboring presomitic mesoderm cells synchronized. The protein is Delta-like protein D (dld) of Danio rerio (Zebrafish).